The sequence spans 181 residues: Large ribosomal subunit protein uL5 (181 aa).

Belongs to the universal ribosomal protein uL5 family. Part of the 50S ribosomal subunit; part of the 5S rRNA/L5/L18/L25 subcomplex. Contacts the 5S rRNA and the P site tRNA. Forms a bridge to the 30S subunit in the 70S ribosome.

This is one of the proteins that bind and probably mediate the attachment of the 5S RNA into the large ribosomal subunit, where it forms part of the central protuberance. In the 70S ribosome it contacts protein S13 of the 30S subunit (bridge B1b), connecting the 2 subunits; this bridge is implicated in subunit movement. Contacts the P site tRNA; the 5S rRNA and some of its associated proteins might help stabilize positioning of ribosome-bound tRNAs. This is Large ribosomal subunit protein uL5 from Acaryochloris marina (strain MBIC 11017).